A 264-amino-acid polypeptide reads, in one-letter code: Elongation factor Ts (264 aa).

Residues 76–79 form an involved in Mg(2+) ion dislocation from EF-Tu region; sequence TDFV.

The protein belongs to the EF-Ts family.

Its subcellular location is the cytoplasm. Functionally, associates with the EF-Tu.GDP complex and induces the exchange of GDP to GTP. It remains bound to the aminoacyl-tRNA.EF-Tu.GTP complex up to the GTP hydrolysis stage on the ribosome. The chain is Elongation factor Ts from Deinococcus deserti (strain DSM 17065 / CIP 109153 / LMG 22923 / VCD115).